A 106-amino-acid polypeptide reads, in one-letter code: ATPase inhibitor, mitochondrial (106 aa).

A mitochondrion-targeting transit peptide spans 1-25 (MAGSALAVRARFGVWGMKVLQTRGF). Residues 26 to 52 (VSDSSDSMDTGAGSIREAGGAFGKREK) are N-terminal inhibitory region. A disordered region spans residues 26–58 (VSDSSDSMDTGAGSIREAGGAFGKREKAEEDRY). The residue at position 39 (S39) is a Phosphoserine. Basic and acidic residues predominate over residues 48–58 (GKREKAEEDRY). Residues 60–106 (REKTKEQLAALRKHHEDEIDHHSKEIERLQKQIERHKKKIQQLKNNH) adopt a coiled-coil conformation. Positions 74 to 106 (HEDEIDHHSKEIERLQKQIERHKKKIQQLKNNH) are antiparallel alpha-helical coiled coil region. K103 is modified (N6-succinyllysine).

The protein belongs to the ATPase inhibitor family. In terms of assembly, homodimer; represents the active form and is present at a pH value below 6.5. Homotetramer; represents the inactive form and is present at a pH value above 7.0.

The protein localises to the mitochondrion. Endogenous F(1)F(o)-ATPase inhibitor limiting ATP depletion when the mitochondrial membrane potential falls below a threshold and the F(1)F(o)-ATP synthase starts hydrolyzing ATP to pump protons out of the mitochondrial matrix. Required to avoid the consumption of cellular ATP when the F(1)F(o)-ATP synthase enzyme acts as an ATP hydrolase. Indirectly acts as a regulator of heme synthesis in erythroid tissues: regulates heme synthesis by modulating the mitochondrial pH and redox potential, allowing FECH to efficiently catalyze the incorporation of iron into protoporphyrin IX to produce heme. The sequence is that of ATPase inhibitor, mitochondrial from Mus musculus (Mouse).